The primary structure comprises 894 residues: UPF0182 protein GSU2333 (894 aa).

7 consecutive transmembrane segments (helical) span residues 6 to 26 (FLLI…LITF), 50 to 70 (VGAG…NLYF), 98 to 118 (MVQM…LLAG), 162 to 182 (KGFV…VYFF), 203 to 223 (LAIL…LDAV), 250 to 270 (ILTL…WKGA), and 275 to 295 (LIPP…YPAM).

The protein belongs to the UPF0182 family.

It localises to the cell membrane. The protein is UPF0182 protein GSU2333 of Geobacter sulfurreducens (strain ATCC 51573 / DSM 12127 / PCA).